Reading from the N-terminus, the 218-residue chain is Peptidyl-tRNA hydrolase (218 aa).

Position 19 (Tyr19) interacts with tRNA. His24 functions as the Proton acceptor in the catalytic mechanism. TRNA contacts are provided by Tyr68, Asn70, and Asn116. The tract at residues 181 to 218 (WNTATQRLNARPAPPKPPKAPKAPQPAAADQPKDESQP) is disordered. Pro residues predominate over residues 192–204 (PAPPKPPKAPKAP).

Belongs to the PTH family. Monomer.

The protein localises to the cytoplasm. The catalysed reaction is an N-acyl-L-alpha-aminoacyl-tRNA + H2O = an N-acyl-L-amino acid + a tRNA + H(+). Hydrolyzes ribosome-free peptidyl-tRNAs (with 1 or more amino acids incorporated), which drop off the ribosome during protein synthesis, or as a result of ribosome stalling. Functionally, catalyzes the release of premature peptidyl moieties from peptidyl-tRNA molecules trapped in stalled 50S ribosomal subunits, and thus maintains levels of free tRNAs and 50S ribosomes. This chain is Peptidyl-tRNA hydrolase, found in Azoarcus sp. (strain BH72).